A 285-amino-acid polypeptide reads, in one-letter code: Phosphoribosylaminoimidazole-succinocarboxamide synthase (285 aa).

It belongs to the SAICAR synthetase family.

It catalyses the reaction 5-amino-1-(5-phospho-D-ribosyl)imidazole-4-carboxylate + L-aspartate + ATP = (2S)-2-[5-amino-1-(5-phospho-beta-D-ribosyl)imidazole-4-carboxamido]succinate + ADP + phosphate + 2 H(+). Its pathway is purine metabolism; IMP biosynthesis via de novo pathway; 5-amino-1-(5-phospho-D-ribosyl)imidazole-4-carboxamide from 5-amino-1-(5-phospho-D-ribosyl)imidazole-4-carboxylate: step 1/2. This is Phosphoribosylaminoimidazole-succinocarboxamide synthase from Leptospira interrogans serogroup Icterohaemorrhagiae serovar copenhageni (strain Fiocruz L1-130).